A 190-amino-acid polypeptide reads, in one-letter code: Protein GrpE (190 aa).

The segment at 21–49 (DDLQEEVEATETEETVEEVIEETPEKSEL) is disordered. The segment covering 23–42 (LQEEVEATETEETVEEVIEE) has biased composition (acidic residues).

Belongs to the GrpE family. As to quaternary structure, homodimer.

It is found in the cytoplasm. In terms of biological role, participates actively in the response to hyperosmotic and heat shock by preventing the aggregation of stress-denatured proteins, in association with DnaK and GrpE. It is the nucleotide exchange factor for DnaK and may function as a thermosensor. Unfolded proteins bind initially to DnaJ; upon interaction with the DnaJ-bound protein, DnaK hydrolyzes its bound ATP, resulting in the formation of a stable complex. GrpE releases ADP from DnaK; ATP binding to DnaK triggers the release of the substrate protein, thus completing the reaction cycle. Several rounds of ATP-dependent interactions between DnaJ, DnaK and GrpE are required for fully efficient folding. The chain is Protein GrpE from Streptococcus pyogenes serotype M3 (strain SSI-1).